Reading from the N-terminus, the 204-residue chain is 3,4-dihydroxy-2-butanone 4-phosphate synthase (204 aa).

Position 30 (Glu30) interacts with Mg(2+). Asp34 is a D-ribulose 5-phosphate binding site. Residue Cys59 is modified to S-glutathionyl cysteine. Residues Thr85 and 142–146 (RRGHT) contribute to the D-ribulose 5-phosphate site. Mg(2+) is bound at residue His145.

In terms of assembly, homodimer. Mg(2+) serves as cofactor. Mn(2+) is required as a cofactor. S-glutathionylation is reversible and dependent on a glutaredoxin.

It carries out the reaction D-ribulose 5-phosphate = (2S)-2-hydroxy-3-oxobutyl phosphate + formate + H(+). It functions in the pathway cofactor biosynthesis; riboflavin biosynthesis; 2-hydroxy-3-oxobutyl phosphate from D-ribulose 5-phosphate: step 1/1. Its function is as follows. Catalyzes the conversion of D-ribulose 5-phosphate to formate and 3,4-dihydroxy-2-butanone 4-phosphate. This chain is 3,4-dihydroxy-2-butanone 4-phosphate synthase (RIB3), found in Candida albicans (strain SC5314 / ATCC MYA-2876) (Yeast).